Consider the following 263-residue polypeptide: Small ribosomal subunit protein eS1 (263 aa).

Residues 235–254 (HGEGGGGKREAGDKSERPEG) show a composition bias toward basic and acidic residues. The tract at residues 235–263 (HGEGGGGKREAGDKSERPEGYEPPVQESV) is disordered.

The protein belongs to the eukaryotic ribosomal protein eS1 family. In terms of assembly, component of the small ribosomal subunit. Mature ribosomes consist of a small (40S) and a large (60S) subunit. The 40S subunit contains about 33 different proteins and 1 molecule of RNA (18S). The 60S subunit contains about 49 different proteins and 3 molecules of RNA (28S, 5.8S and 5S).

Its subcellular location is the cytoplasm. This is Small ribosomal subunit protein eS1 from Bombyx mandarina (Wild silk moth).